A 132-amino-acid chain; its full sequence is Mediator of RNA polymerase II transcription subunit 11 (132 aa).

Belongs to the Mediator complex subunit 11 family. In terms of assembly, component of the Mediator complex.

The protein resides in the nucleus. Component of the Mediator complex, a coactivator involved in the regulated transcription of nearly all RNA polymerase II-dependent genes. Mediator functions as a bridge to convey information from gene-specific regulatory proteins to the basal RNA polymerase II transcription machinery. Mediator is recruited to promoters by direct interactions with regulatory proteins and serves as a scaffold for theQ9P086 assembly of a functional pre-initiation complex with RNA polymerase II and the general transcription factors. The sequence is that of Mediator of RNA polymerase II transcription subunit 11 (MED11) from Aedes aegypti (Yellowfever mosquito).